The sequence spans 277 residues: Large ribosomal subunit protein uL2 (277 aa).

A disordered region spans residues 225 to 277 (MNPIDHPHGGGEGKTAAGRHPVSPWGTPSKGFRTRVNKRTDGMIVRRRYSNKG).

This sequence belongs to the universal ribosomal protein uL2 family. Part of the 50S ribosomal subunit. Forms a bridge to the 30S subunit in the 70S ribosome.

In terms of biological role, one of the primary rRNA binding proteins. Required for association of the 30S and 50S subunits to form the 70S ribosome, for tRNA binding and peptide bond formation. It has been suggested to have peptidyltransferase activity; this is somewhat controversial. Makes several contacts with the 16S rRNA in the 70S ribosome. The protein is Large ribosomal subunit protein uL2 of Nitrosospira multiformis (strain ATCC 25196 / NCIMB 11849 / C 71).